The chain runs to 337 residues: Phosphoenolpyruvate transferase (337 aa).

Residue Asp-69 participates in 7,8-didemethyl-8-hydroxy-5-deazariboflavin binding.

The protein belongs to the CofD family. Homodimer. Mg(2+) serves as cofactor.

It catalyses the reaction enolpyruvoyl-2-diphospho-5'-guanosine + 7,8-didemethyl-8-hydroxy-5-deazariboflavin = dehydro coenzyme F420-0 + GMP + H(+). The protein operates within cofactor biosynthesis; coenzyme F420 biosynthesis. Its function is as follows. Catalyzes the transfer of the phosphoenolpyruvate moiety from enoylpyruvoyl-2-diphospho-5'-guanosine (EPPG) to 7,8-didemethyl-8-hydroxy-5-deazariboflavin (FO) with the formation of dehydro coenzyme F420-0 and GMP. This Mycobacterium avium (strain 104) protein is Phosphoenolpyruvate transferase.